The primary structure comprises 353 residues: MSTLLLNLDFGEPPPKKALEGNAKHRNFVKKRRLLERRGFLSKKNQPPSKAPKLHSEPSKKGETPTVDGTWKTPSFPKKKTAASSNGSGQPLDKKAAVSWLTPAPSKKADSVAAKVDLLGEFQSALPKINSHPTRSQKKSSQKKSSKKNHPQKNAPQNSTQAHSENKCSGASQKLPRKMVAIDCEMVGTGPKGHVSSLARCSIVNYNGDVLYDEYILPPCHIVDYRTRWSGIRKQHMVNATPFKIARGQILKILTGKIVVGHAIHNDFKALQYFHPKSLTRDTSHIPPLNRKADCPENATMSLKHLTKKLLNRDIQVGKSGHSSVEDAQATMELYKLVEVEWEEHLARNPPTD.

2 disordered regions span residues 1–93 (MSTL…QPLD) and 125–172 (ALPK…SGAS). Basic and acidic residues predominate over residues 14-23 (PPKKALEGNA). The span at 24–35 (KHRNFVKKRRLL) shows a compositional bias: basic residues. The segment covering 54 to 63 (LHSEPSKKGE) has biased composition (basic and acidic residues). A compositionally biased stretch (basic residues) spans 135–151 (RSQKKSSQKKSSKKNHP). Positions 152–172 (QKNAPQNSTQAHSENKCSGAS) are enriched in polar residues. The 176-residue stretch at 178-353 (KMVAIDCEMV…EHLARNPPTD (176 aa)) folds into the Exonuclease domain.

It is found in the nucleus. The protein localises to the nucleolus. In terms of biological role, 3'-&gt; 5'-exoribonuclease involved in ribosome biogenesis in the processing of the 12S pre-rRNA. Displays a strong specificity for a 3'-end containing a free hydroxyl group. The protein is Interferon-stimulated 20 kDa exonuclease-like 2 (ISG20L2) of Homo sapiens (Human).